A 701-amino-acid chain; its full sequence is Elongation factor G (701 aa).

The 279-residue stretch at 8-286 (ERIRNIGIIA…AVVYYLPSPV (279 aa)) folds into the tr-type G domain. GTP-binding positions include 17–24 (AHIDAGKT), 85–89 (DTPGH), and 139–142 (NKMD).

The protein belongs to the TRAFAC class translation factor GTPase superfamily. Classic translation factor GTPase family. EF-G/EF-2 subfamily.

The protein resides in the cytoplasm. Functionally, catalyzes the GTP-dependent ribosomal translocation step during translation elongation. During this step, the ribosome changes from the pre-translocational (PRE) to the post-translocational (POST) state as the newly formed A-site-bound peptidyl-tRNA and P-site-bound deacylated tRNA move to the P and E sites, respectively. Catalyzes the coordinated movement of the two tRNA molecules, the mRNA and conformational changes in the ribosome. In Roseiflexus castenholzii (strain DSM 13941 / HLO8), this protein is Elongation factor G.